Here is a 168-residue protein sequence, read N- to C-terminus: Protein A40 (168 aa).

The Cytoplasmic segment spans residues 1 to 9 (MNKPKTDYA). Residues 10–30 (GYACCVICGLIVGIIFTATLL) traverse the membrane as a helical; Signal-anchor for type II membrane protein segment. Topologically, residues 31–168 (KVVERKLVHT…TTFLSYHYFG (138 aa)) are extracellular. Positions 63-168 (YNNKCIHLST…TTFLSYHYFG (106 aa)) constitute a C-type lectin domain.

Belongs to the poxviridae A40 protein family.

It localises to the host membrane. The protein is Protein A40 of Homo sapiens (Human).